Here is a 903-residue protein sequence, read N- to C-terminus: Centrobin (903 aa).

Polar residues predominate over residues 1 to 10 (MATSADSPSS). The tract at residues 1-34 (MATSADSPSSPLGAEDLLSDSSEPPGLNQVSSEV) is disordered. Ser-80 bears the Phosphoserine mark. Disordered regions lie at residues 110 to 140 (LQTS…DSDS), 471 to 493 (LRQA…GQHQ), 568 to 597 (LSTT…KEER), 669 to 704 (SALG…LPPA), 772 to 799 (RVPE…DGLT), and 837 to 903 (SGTD…GVWR). Residues 196-560 (RRKHCERHIQ…ERLQAMLQAH (365 aa)) adopt a coiled-coil conformation. Positions 365 to 903 (QEHQLKEHYQ…SMRSRGGVWR (539 aa)) are required for centrosome localization. The segment covering 572-590 (LPPPNPPAPPAGPSSPGPQ) has biased composition (pro residues). A compositionally biased stretch (basic and acidic residues) spans 675–685 (HPDHRAERPFP). Over residues 778–791 (SSHSQGSGPSSGSP) the composition is skewed to low complexity. Ser-790 carries the phosphoserine modification. The span at 837–863 (SGTDGRGDNVPRRNTDSRLGEIPRKEI) shows a compositional bias: basic and acidic residues.

As to quaternary structure, interacts with LYST. Widely expressed (at protein level). Highly expressed in testis. Also expressed in spleen, thymus, prostate, small intestine, colon and peripheral blood leukocytes.

The protein localises to the cytoplasm. The protein resides in the cytoskeleton. Its subcellular location is the microtubule organizing center. It localises to the centrosome. It is found in the centriole. In terms of biological role, required for centriole duplication. Inhibition of centriole duplication leading to defects in cytokinesis. The sequence is that of Centrobin (CNTROB) from Homo sapiens (Human).